The sequence spans 609 residues: Neutral protease (609 aa).

A signal peptide spans 1 to 24 (MNKTQRHINWLLAVSAATALPVTA). The propeptide occupies 25-196 (AEMINVNDGS…VLQTWDGLNH (172 aa)). Position 343 (His343) interacts with Zn(2+). Glu344 is a catalytic residue. Zn(2+)-binding residues include His347 and Glu367. Catalysis depends on His426, which acts as the Proton donor.

It belongs to the peptidase M4 family. Zn(2+) is required as a cofactor.

Its subcellular location is the secreted. It carries out the reaction Preferential cleavage of bonds with bulky hydrophobic groups in P2 and P1'. Phe at P1' is the most favored residue, which distinguished this enzyme from thermolysin.. Extracellular zinc metalloprotease. The chain is Neutral protease (nprV) from Vibrio proteolyticus (Aeromonas proteolytica).